The chain runs to 238 residues: SPEG neighbor protein (238 aa).

Residues Q29–R55 form the IQ domain. Ig-like domains are found at residues P54–L143 and P147–D236.

The sequence is that of SPEG neighbor protein from Homo sapiens (Human).